Consider the following 1177-residue polypeptide: DNA-directed RNA polymerase subunit beta (1177 aa).

Residues 1–36 (MEGCILADSRQSKTAASPSPSRPQSSSNNSVPGAPN) form a disordered region. Positions 17 to 32 (SPSPSRPQSSSNNSVP) are enriched in low complexity.

The protein belongs to the RNA polymerase beta chain family. The RNAP catalytic core consists of 2 alpha, 1 beta, 1 beta' and 1 omega subunit. When a sigma factor is associated with the core the holoenzyme is formed, which can initiate transcription.

The catalysed reaction is RNA(n) + a ribonucleoside 5'-triphosphate = RNA(n+1) + diphosphate. Its function is as follows. DNA-dependent RNA polymerase catalyzes the transcription of DNA into RNA using the four ribonucleoside triphosphates as substrates. This is DNA-directed RNA polymerase subunit beta from Mycobacterium tuberculosis (strain ATCC 25177 / H37Ra).